The sequence spans 140 residues: FAD synthase (140 aa).

ATP contacts are provided by residues 9-10 (TF), 14-17 (HPGH), and aspartate 92.

This sequence belongs to the archaeal FAD synthase family. As to quaternary structure, homodimer. A divalent metal cation serves as cofactor.

It carries out the reaction FMN + ATP + H(+) = FAD + diphosphate. It functions in the pathway cofactor biosynthesis; FAD biosynthesis; FAD from FMN: step 1/1. In terms of biological role, catalyzes the transfer of the AMP portion of ATP to flavin mononucleotide (FMN) to produce flavin adenine dinucleotide (FAD) coenzyme. The chain is FAD synthase from Natronomonas pharaonis (strain ATCC 35678 / DSM 2160 / CIP 103997 / JCM 8858 / NBRC 14720 / NCIMB 2260 / Gabara) (Halobacterium pharaonis).